Consider the following 303-residue polypeptide: Taste receptor type 2 member 13 (303 aa).

The Extracellular portion of the chain corresponds to 1–7 (MESALPS). The helical transmembrane segment at 8–28 (IFTLVIIAEFIIGNLSNGFIV) threads the bilayer. Over 29-55 (LINCIDWVSKRELSSVDKLLIILAISR) the chain is Cytoplasmic. The chain crosses the membrane as a helical span at residues 56-76 (IGLIWEILVSWFLALHSLAIF). The Extracellular portion of the chain corresponds to 77-85 (VSGTGLRIM). Residues 86 to 106 (IFSWIVSNHFNLWLATILSIF) traverse the membrane as a helical segment. At 107-128 (YLLKIASFSSPAFLYLKRRVNK) the chain is on the cytoplasmic side. A helical transmembrane segment spans residues 129 to 149 (VILMILLGTLVFLFLNLIQIN). Residues 150–184 (MLIKDWLDRYERNTTWNFSMSDFETFSVSVRFTMT) are Extracellular-facing. 2 N-linked (GlcNAc...) asparagine glycosylation sites follow: Asn162 and Asn166. A helical membrane pass occupies residues 185 to 205 (MFSLTPFTVAFISFLLLVFSL). Residues 206 to 232 (QKHLQKMQLNYKGHRDPRTKVHTNALK) are Cytoplasmic-facing. A helical transmembrane segment spans residues 233–253 (IVISFLLLYASFFLSILISWI). Residues 254 to 261 (SELYQNTV) lie on the Extracellular side of the membrane. The helical transmembrane segment at 262 to 282 (IYMLCETIGAFYPSSHSFLLI) threads the bilayer. The Cytoplasmic segment spans residues 283 to 303 (LGNAKLRQAFLLVAAKVWAKR).

This sequence belongs to the G-protein coupled receptor T2R family.

Its subcellular location is the membrane. Functionally, receptor that may play a role in the perception of bitterness and is gustducin-linked. May play a role in sensing the chemical composition of the gastrointestinal content. The activity of this receptor may stimulate alpha gustducin, mediate PLC-beta-2 activation and lead to the gating of TRPM5. The sequence is that of Taste receptor type 2 member 13 (TAS2R13) from Pan troglodytes (Chimpanzee).